A 210-amino-acid chain; its full sequence is Homeobox protein Rhox5 (210 aa).

The disordered stretch occupies residues 29–117 (KAEAFLQAGE…KNGKPEDRQM (89 aa)). A DNA-binding region (homeobox; atypical) is located at residues 117–175 (MPLQGSRFAQQRLSELQSILQRTNSFDVPREDLYRLMDTCVARVQNWFKIRRAAARRNR).

Its subcellular location is the nucleus. Transcription factor required for differentiation of embryonic stem cells (ESCs) into primordial germ cells. This chain is Homeobox protein Rhox5 (Rhox5), found in Mus minutoides (Southern African pygmy mouse).